The following is a 115-amino-acid chain: Migration and invasion enhancer 1 (115 aa).

S2 carries the N-acetylserine modification. The cysteines at positions 30 and 33 are disulfide-linked. C112 carries S-geranylgeranyl cysteine lipidation. A propeptide spans 113–115 (VIL) (removed in mature form).

This sequence belongs to the SelWTH family. Interacts with GPX1. Isoprenylation facilitates association with the plasma membrane and enhances the migratory phenotype of cells by inducing increased filopodia formation. In terms of tissue distribution, widely expressed with highest levels in kidney followed by brain and testis.

The protein localises to the cytoplasm. Its subcellular location is the cytosol. It is found in the cell membrane. Increases cell migration by inducing filopodia formation at the leading edge of migrating cells. Plays a role in regulation of apoptosis, possibly through control of CASP3. May be involved in a redox-related process. The polypeptide is Migration and invasion enhancer 1 (Mien1) (Mus musculus (Mouse)).